Consider the following 343-residue polypeptide: MKKLTLAELATITGGELFGDESLVVGRVAPMDKAQEGDVTFLSNPKYAKHLSECKATVVMVKAEHKDQCAGNALVVADPYVAFARVVQAMDTTPKPAEDIAPSAVIASDVKMGENVAIGANAVIETGVELGDNVVIGAGCFIGKNAKLGNNTKLWANVTIYHEVSLGDDCLVQSGTVIGSDGFGYANDRGEWIKIPQLGSVRIGNRVEIGACTTIDRGALEDTIIEDNVILDNQLQIAHNVQIGYGTVMPGGTIVAGSTKIGKYCQIGGASVLNGHITIADGVAITGMGMVMRSIEEKGLYSSGIPLQTNREWRKTATRVHRIDEMNKRLKAVEKQLEQKEES.

Histidine 239 (proton acceptor) is an active-site residue.

This sequence belongs to the transferase hexapeptide repeat family. LpxD subfamily. Homotrimer.

The catalysed reaction is a UDP-3-O-[(3R)-3-hydroxyacyl]-alpha-D-glucosamine + a (3R)-hydroxyacyl-[ACP] = a UDP-2-N,3-O-bis[(3R)-3-hydroxyacyl]-alpha-D-glucosamine + holo-[ACP] + H(+). It participates in bacterial outer membrane biogenesis; LPS lipid A biosynthesis. Its function is as follows. Catalyzes the N-acylation of UDP-3-O-acylglucosamine using 3-hydroxyacyl-ACP as the acyl donor. Is involved in the biosynthesis of lipid A, a phosphorylated glycolipid that anchors the lipopolysaccharide to the outer membrane of the cell. The chain is UDP-3-O-acylglucosamine N-acyltransferase from Vibrio parahaemolyticus serotype O3:K6 (strain RIMD 2210633).